Reading from the N-terminus, the 418-residue chain is Beta-arrestin-1 (418 aa).

The segment at 1–163 (MGDKGTRVFK…LEEKIHKRNS (163 aa)) is interaction with SRC. The tract at residues 45 to 86 (PEYLKERRVYVTLTCAFRYGREDLDVLGLTFRKDLFVANVQS) is interaction with CHRM2. Tyr-47 carries the phosphotyrosine modification. Lys-250, Met-255, Lys-324, and Lys-326 together coordinate 1D-myo-inositol hexakisphosphate. An interaction with TRAF6 region spans residues 318–418 (IVSYKVKVKL…GTGSPHLNNR (101 aa)). Disordered stretches follow at residues 353 to 374 (HPKP…PVDT) and 397 to 418 (KGMK…LNNR). A compositionally biased stretch (basic and acidic residues) spans 355-366 (KPKEEPPHREVP). Ser-412 is subject to Phosphoserine. Ser-412 carries the post-translational modification Phosphoserine; by GRK5.

The protein belongs to the arrestin family. As to quaternary structure, monomer. Homodimer. Homooligomer; the self-association is mediated by InsP6-binding. Heterooligomer with ARRB2; the association is mediated by InsP6-binding. Interacts with ADRB2 (phosphorylated). Interacts with CHRM2 (phosphorylated). Interacts with LHCGR. Interacts with CYTH2 and CASR. Interacts with AP2B1 (dephosphorylated at 'Tyr-737'); phosphorylation of AP2B1 at 'Tyr-737' disrupts the interaction. Interacts (dephosphorylated at Ser-412) with CLTC. Interacts with CCR2 and GRK2. Interacts with CRR5. Interacts with PTAFR (phosphorylated on serine residues). Interacts with CLTC and MAP2K3. Interacts with CREB1. Interacts with TRAF6. Interacts with IGF1R and MDM2. Interacts with C5AR1. Interacts with PDE4D. Interacts with SRC (via the SH3 domain and the protein kinase domain); the interaction is independent of the phosphorylation state of SRC C-terminus. Interacts with TACR1. Interacts with RAF1. Interacts with CHUK, IKBKB and MAP3K14. Interacts with DVL1; the interaction is enhanced by phosphorylation of DVL1. Interacts with DVL2; the interaction is enhanced by phosphorylation of DVL2. Interacts with IGF1R. Associates with MAP kinase p38. Part of a MAPK signaling complex consisting of TACR1, ARRB1, SRC, MAPK1 (activated) and MAPK3 (activated). Part of a MAPK signaling complex consisting of F2RL1, ARRB1, RAF1, MAPK1 (activated) and MAPK3 (activated). Interacts with GPR143. Interacts with MAP2K4/MKK4. Interacts with HCK and CXCR1 (phosphorylated). Interacts with ACKR3 and ACKR4. Interacts with ARRDC1; the interaction is direct. Interacts with GPR61, GPR62 and GPR135. In terms of processing, constitutively phosphorylated at Ser-412 in the cytoplasm. At the plasma membrane, is rapidly dephosphorylated, a process that is required for clathrin binding and beta-2 adrenergic receptor/ADRB2 endocytosis but not for ADRB2 binding and desensitization. Once internalized, is rephosphorylated. Post-translationally, the ubiquitination status appears to regulate the formation and trafficking of beta-arrestin-GPCR complexes and signaling. Ubiquitination appears to occur GPCR-specific. Ubiquitinated by MDM2; the ubiquitination is required for rapid internalization of ADRB2. Deubiquitinated by USP33; the deubiquitination leads to a dissociation of the beta-arrestin-GPCR complex. Stimulation of a class A GPCR, such as ADRB2, induces transient ubiquitination and subsequently promotes association with USP33. In terms of tissue distribution, predominantly localized in neuronal tissues and in the spleen.

The protein resides in the cytoplasm. Its subcellular location is the nucleus. It localises to the cell membrane. The protein localises to the membrane. It is found in the clathrin-coated pit. The protein resides in the cell projection. Its subcellular location is the pseudopodium. It localises to the cytoplasmic vesicle. Functionally, functions in regulating agonist-mediated G-protein coupled receptor (GPCR) signaling by mediating both receptor desensitization and resensitization processes. During homologous desensitization, beta-arrestins bind to the GPRK-phosphorylated receptor and sterically preclude its coupling to the cognate G-protein; the binding appears to require additional receptor determinants exposed only in the active receptor conformation. The beta-arrestins target many receptors for internalization by acting as endocytic adapters (CLASPs, clathrin-associated sorting proteins) and recruiting the GPRCs to the adapter protein 2 complex 2 (AP-2) in clathrin-coated pits (CCPs). However, the extent of beta-arrestin involvement appears to vary significantly depending on the receptor, agonist and cell type. Internalized arrestin-receptor complexes traffic to intracellular endosomes, where they remain uncoupled from G-proteins. Two different modes of arrestin-mediated internalization occur. Class A receptors, like ADRB2, OPRM1, ENDRA, D1AR and ADRA1B dissociate from beta-arrestin at or near the plasma membrane and undergo rapid recycling. Class B receptors, like AVPR2, AGTR1, NTSR1, TRHR and TACR1 internalize as a complex with arrestin and traffic with it to endosomal vesicles, presumably as desensitized receptors, for extended periods of time. Receptor resensitization then requires that receptor-bound arrestin is removed so that the receptor can be dephosphorylated and returned to the plasma membrane. Involved in internalization of P2RY4 and UTP-stimulated internalization of P2RY2. Involved in phosphorylation-dependent internalization of OPRD1 ands subsequent recycling. Involved in the degradation of cAMP by recruiting cAMP phosphodiesterases to ligand-activated receptors. Beta-arrestins function as multivalent adapter proteins that can switch the GPCR from a G-protein signaling mode that transmits short-lived signals from the plasma membrane via small molecule second messengers and ion channels to a beta-arrestin signaling mode that transmits a distinct set of signals that are initiated as the receptor internalizes and transits the intracellular compartment. Acts as a signaling scaffold for MAPK pathways such as MAPK1/3 (ERK1/2). ERK1/2 activated by the beta-arrestin scaffold is largely excluded from the nucleus and confined to cytoplasmic locations such as endocytic vesicles, also called beta-arrestin signalosomes. Recruits c-Src/SRC to ADRB2 resulting in ERK activation. GPCRs for which the beta-arrestin-mediated signaling relies on both ARRB1 and ARRB2 (codependent regulation) include ADRB2, F2RL1 and PTH1R. For some GPCRs the beta-arrestin-mediated signaling relies on either ARRB1 or ARRB2 and is inhibited by the other respective beta-arrestin form (reciprocal regulation). Inhibits ERK1/2 signaling in AGTR1- and AVPR2-mediated activation (reciprocal regulation). Is required for SP-stimulated endocytosis of NK1R and recruits c-Src/SRC to internalized NK1R resulting in ERK1/2 activation, which is required for the antiapoptotic effects of SP. Is involved in proteinase-activated F2RL1-mediated ERK activity. Acts as a signaling scaffold for the AKT1 pathway. Is involved in alpha-thrombin-stimulated AKT1 signaling. Is involved in IGF1-stimulated AKT1 signaling leading to increased protection from apoptosis. Involved in activation of the p38 MAPK signaling pathway and in actin bundle formation. Involved in F2RL1-mediated cytoskeletal rearrangement and chemotaxis. Involved in AGTR1-mediated stress fiber formation by acting together with GNAQ to activate RHOA. Appears to function as signaling scaffold involved in regulation of MIP-1-beta-stimulated CCR5-dependent chemotaxis. Involved in attenuation of NF-kappa-B-dependent transcription in response to GPCR or cytokine stimulation by interacting with and stabilizing CHUK. May serve as nuclear messenger for GPCRs. Involved in OPRD1-stimulated transcriptional regulation by translocating to CDKN1B and FOS promoter regions and recruiting EP300 resulting in acetylation of histone H4. Involved in regulation of LEF1 transcriptional activity via interaction with DVL1 and/or DVL2 Also involved in regulation of receptors other than GPCRs. Involved in Toll-like receptor and IL-1 receptor signaling through the interaction with TRAF6 which prevents TRAF6 autoubiquitination and oligomerization required for activation of NF-kappa-B and JUN. Binds phosphoinositides. Binds inositolhexakisphosphate (InsP6). Involved in IL8-mediated granule release in neutrophils. Required for atypical chemokine receptor ACKR2-induced RAC1-LIMK1-PAK1-dependent phosphorylation of cofilin (CFL1) and for the up-regulation of ACKR2 from endosomal compartment to cell membrane, increasing its efficiency in chemokine uptake and degradation. Involved in the internalization of the atypical chemokine receptor ACKR3. Negatively regulates the NOTCH signaling pathway by mediating the ubiquitination and degradation of NOTCH1 by ITCH. Participates in the recruitment of the ubiquitin-protein ligase to the receptor. The protein is Beta-arrestin-1 of Rattus norvegicus (Rat).